We begin with the raw amino-acid sequence, 212 residues long: 3-isopropylmalate dehydratase small subunit (212 aa).

It belongs to the LeuD family. LeuD type 1 subfamily. Heterodimer of LeuC and LeuD.

It catalyses the reaction (2R,3S)-3-isopropylmalate = (2S)-2-isopropylmalate. The protein operates within amino-acid biosynthesis; L-leucine biosynthesis; L-leucine from 3-methyl-2-oxobutanoate: step 2/4. Catalyzes the isomerization between 2-isopropylmalate and 3-isopropylmalate, via the formation of 2-isopropylmaleate. This Thiobacillus denitrificans (strain ATCC 25259 / T1) protein is 3-isopropylmalate dehydratase small subunit.